The sequence spans 365 residues: Outer membrane protein assembly factor BamC (365 aa).

Residues 1-19 (MKHNRLAIAALAPVLILVG) form the signal peptide. C20 carries the N-palmitoyl cysteine lipid modification. C20 carries the S-diacylglycerol cysteine lipid modification.

This sequence belongs to the BamC family. In terms of assembly, part of the Bam complex.

The protein localises to the cell outer membrane. Functionally, part of the outer membrane protein assembly complex, which is involved in assembly and insertion of beta-barrel proteins into the outer membrane. The polypeptide is Outer membrane protein assembly factor BamC (Ferrimonas balearica (strain DSM 9799 / CCM 4581 / KCTC 23876 / PAT)).